The sequence spans 199 residues: 3-isopropylmalate dehydratase small subunit (199 aa).

This sequence belongs to the LeuD family. LeuD type 1 subfamily. Heterodimer of LeuC and LeuD.

The catalysed reaction is (2R,3S)-3-isopropylmalate = (2S)-2-isopropylmalate. Its pathway is amino-acid biosynthesis; L-leucine biosynthesis; L-leucine from 3-methyl-2-oxobutanoate: step 2/4. Catalyzes the isomerization between 2-isopropylmalate and 3-isopropylmalate, via the formation of 2-isopropylmaleate. This chain is 3-isopropylmalate dehydratase small subunit, found in Leifsonia xyli subsp. xyli (strain CTCB07).